A 398-amino-acid chain; its full sequence is Mitogen-activated protein kinase 1 (398 aa).

The disordered stretch occupies residues 1–26 (MDAGAQPPDTEMAEAGGGQQPPAAAA). Residues 67–352 (KPPILPIGKG…VEGALAHPYL (286 aa)) enclose the Protein kinase domain. Residues 73–81 (IGKGAYGIV) and K96 contribute to the ATP site. D193 serves as the catalytic Proton acceptor. T225 is subject to Phosphothreonine. The TXY signature appears at 225-227 (TEY). The residue at position 227 (Y227) is a Phosphotyrosine.

It belongs to the protein kinase superfamily. CMGC Ser/Thr protein kinase family. MAP kinase subfamily. May interact with RAC1. Dually phosphorylated on Thr-225 and Tyr-227, which activates the enzyme.

The enzyme catalyses L-seryl-[protein] + ATP = O-phospho-L-seryl-[protein] + ADP + H(+). It catalyses the reaction L-threonyl-[protein] + ATP = O-phospho-L-threonyl-[protein] + ADP + H(+). Activated by threonine and tyrosine phosphorylation. Activated in response to sphingolipid elicitor (SE). Its function is as follows. Involved in sphingolipid elicitor (SE)-dependent defense signaling pathway. Acts downstream of heterotrimeric G protein alpha subunit and small GTPase RAC1. May regulate the expression of various genes involved in biotic and abiotic stress response. Involved in an abscisic acid signaling pathway that regulates the activities of antioxidant enzymes and the production of hydrogen peroxide. Acts downstream of CCAMK. In Oryza sativa subsp. japonica (Rice), this protein is Mitogen-activated protein kinase 1 (MPK1).